A 361-amino-acid chain; its full sequence is Phenylalanine--tRNA ligase alpha subunit (361 aa).

Residue E260 coordinates Mg(2+).

The protein belongs to the class-II aminoacyl-tRNA synthetase family. Phe-tRNA synthetase alpha subunit type 1 subfamily. As to quaternary structure, tetramer of two alpha and two beta subunits. The cofactor is Mg(2+).

It is found in the cytoplasm. The enzyme catalyses tRNA(Phe) + L-phenylalanine + ATP = L-phenylalanyl-tRNA(Phe) + AMP + diphosphate + H(+). This chain is Phenylalanine--tRNA ligase alpha subunit, found in Bartonella henselae (strain ATCC 49882 / DSM 28221 / CCUG 30454 / Houston 1) (Rochalimaea henselae).